The chain runs to 285 residues: Iodotyrosine deiodinase 1 (285 aa).

Residues 1–21 (MFLLTPVLVAVVCILVVWVFK) form a helical membrane-spanning segment. Residues 96–100 (RRSVR) and 124–125 (SG) contribute to the FMN site. The 3,5-diiodo-L-tyrosine site is built by A126, E153, Y157, and K178. The 3-iodo-L-tyrosine site is built by A126, E153, Y157, and K178. Residues 233-235 (TTT) and R275 each bind FMN.

Belongs to the nitroreductase family. As to quaternary structure, homodimer. The cofactor is FMN.

The protein resides in the cell membrane. Its subcellular location is the cytoplasmic vesicle membrane. It catalyses the reaction 2 iodide + L-tyrosine + 2 NADP(+) = 3,5-diiodo-L-tyrosine + 2 NADPH + H(+). The catalysed reaction is iodide + L-tyrosine + NADP(+) = 3-iodo-L-tyrosine + NADPH. The enzyme catalyses 3-iodo-L-tyrosine + iodide + NADP(+) = 3,5-diiodo-L-tyrosine + NADPH + H(+). It carries out the reaction L-tyrosine + chloride + NADP(+) = 3-chloro-L-tyrosine + NADPH. It catalyses the reaction bromide + L-tyrosine + NADP(+) = 3-bromo-L-tyrosine + NADPH. Catalyzes the dehalogenation of halotyrosines such as 3-bromo-L-tyrosine, 3-chloro-L-tyrosine, 3-iodo-L-tyrosine and 3,5-diiodo-L-tyrosine. During thyroid hormone biosynthesis, facilitates iodide salvage by catalysing the oxidative NADPH-dependent deiodination of the halogenated by-products of thyroid hormone production, monoiodotyrosine (L-MIT) and diiodotyrosine (L-DIT). The scavanged iodide can then reenter the hormone-producing pathways. Acts more efficiently on 3-iodo-L-tyrosine than 3,5-diiodo-L-tyrosine. The polypeptide is Iodotyrosine deiodinase 1 (Iyd) (Mus musculus (Mouse)).